Consider the following 147-residue polypeptide: Ribosomal RNA large subunit methyltransferase H (147 aa).

S-adenosyl-L-methionine contacts are provided by residues L64, G95, and 114–119 (LSSLTL).

This sequence belongs to the RNA methyltransferase RlmH family. In terms of assembly, homodimer.

It is found in the cytoplasm. It catalyses the reaction pseudouridine(1915) in 23S rRNA + S-adenosyl-L-methionine = N(3)-methylpseudouridine(1915) in 23S rRNA + S-adenosyl-L-homocysteine + H(+). Specifically methylates the pseudouridine at position 1915 (m3Psi1915) in 23S rRNA. This Polynucleobacter asymbioticus (strain DSM 18221 / CIP 109841 / QLW-P1DMWA-1) (Polynucleobacter necessarius subsp. asymbioticus) protein is Ribosomal RNA large subunit methyltransferase H.